Consider the following 692-residue polypeptide: Methionine--tRNA ligase (692 aa).

The 'HIGH' region motif lies at 12–22 (PYANGSFHIGH). Residues Cys143, Cys146, Cys156, and Cys159 each contribute to the Zn(2+) site. The short motif at 341 to 345 (KMSKS) is the 'KMSKS' region element. ATP is bound at residue Lys344. Positions 586-692 (DFAKIDLRIA…PGAQPGMRVR (107 aa)) constitute a tRNA-binding domain.

This sequence belongs to the class-I aminoacyl-tRNA synthetase family. MetG type 1 subfamily. In terms of assembly, homodimer. Zn(2+) serves as cofactor.

It is found in the cytoplasm. It carries out the reaction tRNA(Met) + L-methionine + ATP = L-methionyl-tRNA(Met) + AMP + diphosphate. Is required not only for elongation of protein synthesis but also for the initiation of all mRNA translation through initiator tRNA(fMet) aminoacylation. The polypeptide is Methionine--tRNA ligase (Bordetella pertussis (strain Tohama I / ATCC BAA-589 / NCTC 13251)).